A 941-amino-acid chain; its full sequence is Ankyrin repeat and MYND domain-containing protein 1 (941 aa).

MORN repeat units follow at residues 2–24 (YQGE…TGES), 25–47 (YHGQ…DGSS), and 70–92 (FQGL…DGSQ). ANK repeat units lie at residues 292 to 321 (KGYT…DVNK), 513 to 542 (MRRM…DPNL), 545 to 574 (VPMQ…RTDI), 581 to 613 (STLT…DVDA), 657 to 691 (GGRT…NPNL), 694 to 723 (SGHS…DPNL), and 737 to 766 (CDLT…DILK). The Zn(2+) site is built by cysteine 880, cysteine 883, cysteine 894, cysteine 897, cysteine 903, cysteine 907, histidine 916, and cysteine 920. The MYND-type zinc finger occupies 880 to 920 (CYQCGRSIGVRLLPCPRCYGILTCSKYCKTKAWTEFHKKDC).

The polypeptide is Ankyrin repeat and MYND domain-containing protein 1 (ANKMY1) (Homo sapiens (Human)).